Here is a 78-residue protein sequence, read N- to C-terminus: Small ribosomal subunit protein bS20 (78 aa).

The protein belongs to the bacterial ribosomal protein bS20 family.

Functionally, binds directly to 16S ribosomal RNA. The sequence is that of Small ribosomal subunit protein bS20 from Streptococcus sanguinis (strain SK36).